The sequence spans 112 residues: uncharacterized protein (112 aa).

An HTH cro/C1-type domain is found at 6-60 (LRQLRKAHKLTMEQLAEKIGIAKSSYGGYEAESKKPPLDKLVILARLYDVSVDYI). The H-T-H motif DNA-binding region spans 17 to 36 (MEQLAEKIGIAKSSYGGYEA).

This is an uncharacterized protein from Bacillus subtilis (strain 168).